The primary structure comprises 458 residues: ATP synthase subunit beta (458 aa).

Gly-148–Thr-155 provides a ligand contact to ATP.

Belongs to the ATPase alpha/beta chains family. F-type ATPases have 2 components, CF(1) - the catalytic core - and CF(0) - the membrane proton channel. CF(1) has five subunits: alpha(3), beta(3), gamma(1), delta(1), epsilon(1). CF(0) has three main subunits: a(1), b(2) and c(9-12). The alpha and beta chains form an alternating ring which encloses part of the gamma chain. CF(1) is attached to CF(0) by a central stalk formed by the gamma and epsilon chains, while a peripheral stalk is formed by the delta and b chains.

The protein resides in the cell inner membrane. It carries out the reaction ATP + H2O + 4 H(+)(in) = ADP + phosphate + 5 H(+)(out). Its function is as follows. Produces ATP from ADP in the presence of a proton gradient across the membrane. The catalytic sites are hosted primarily by the beta subunits. This chain is ATP synthase subunit beta, found in Pseudomonas putida (strain GB-1).